The following is a 115-amino-acid chain: Cycloviolacin-O13 (115 aa).

A signal peptide spans 1-22 (MDAKKMFVALVLIATFALPSLA). Residues 23–81 (TFEKDFITPETIQAILKKSAPLSNIMLEEDVINALLKSKTVISNPIIEEAFLKNSNGLN) constitute a propeptide that is removed on maturation. Positions 82–111 (GIPCGESCVWIPCISAAIGCSCKSKVCYRN) form a cross-link, cyclopeptide (Gly-Asn). Disulfide bonds link cysteine 85-cysteine 101, cysteine 89-cysteine 103, and cysteine 94-cysteine 108. A propeptide spanning residues 112-115 (SLDN) is cleaved from the precursor.

In terms of processing, cycloviolacin-O13 is a cyclic peptide. Expressed in leaves, petals, petioles, roots and runners (at protein level).

Its function is as follows. Probably participates in a plant defense mechanism. Has hemolytic activity. The polypeptide is Cycloviolacin-O13 (Viola odorata (Sweet violet)).